Consider the following 649-residue polypeptide: MPLGQRAGDKSESRYCGVEVLDFPAGEELPAVLSHSLSSSFDFLLAPLVDPDYRPTPGSVLPVAASDLVLGPAQWSSHIVGKISEWIDLDAEDEQLRLDSEITLKQEIAWASHLSLQACVLPPPKRSSCANYARVVNHILQGLTNLQLWLRIPLEKSEPMDEDHDGAKDNSDMSDTVDSWEWWNSFRLLCEHSSQLCVALDVLSTLPSMNSLGRWFGEPVRAAILQTNAFLTNARGYPCLSKRHQKLLTGFFNHSVQVIISGRSNHNVSQGGVLSGDENHTEDTAVRHALSPYLDYIAYIYQRMDPLPEQERFEINYRDFLQSPLQPLMDNLEAQTYETFEKDTVKYTQYQRAIAKALVDRVSDDDVSTTKTVLMVVGAGRGPLVRASLQAAEETGRKLKVYAVEKNPNAVITLHSLIKLEGWESLVTIISSDMRCWEAPEKADILVSELLGSFGDNELSPECLDGAQRFLKPDGISIPSSYTSFIEPITASKLHNDIKAHKDIAHFETAYVVKLHRIARLAPTQSVFTFDHPNPSPNASNQRYTKLKFEIPQETGSCLVHGFAGYFDAVLYKDVHLGIEPNTATPNMFSWFPIFFPLRKPIYVPSKTPIEVHFWRCCGATKVWYEWAVTAPSPSPIHNSNGRSYWVGL.

The segment at 10–300 is TIM barrel; it reads KSESRYCGVE…SPYLDYIAYI (291 aa). Positions 321–627 constitute an SAM-dependent MTase PRMT-type domain; it reads LQSPLQPLMD…CGATKVWYEW (307 aa). S-adenosyl-L-methionine is bound at residue tyrosine 337. Phenylalanine 340 contributes to the a protein binding site. Residues 346-347, glutamate 405, and 433-434 each bind S-adenosyl-L-methionine; these read KY and DM. The a protein site is built by glutamate 449 and glutamate 458. Active-site proton donor/acceptor residues include glutamate 449 and glutamate 458. The beta barrel stretch occupies residues 479 to 649; sequence PSSYTSFIEP…SNGRSYWVGL (171 aa). A dimerization region spans residues 491–507; that stretch reads ASKLHNDIKAHKDIAHF.

It belongs to the class I-like SAM-binding methyltransferase superfamily. Protein arginine N-methyltransferase family.

The protein resides in the cytoplasm. It carries out the reaction L-arginyl-[protein] + 2 S-adenosyl-L-methionine = N(omega),N(omega)'-dimethyl-L-arginyl-[protein] + 2 S-adenosyl-L-homocysteine + 2 H(+). Its function is as follows. Methylates arginine residues in proteins such as histone H4. The sequence is that of Protein arginine N-methyltransferase 5 (PRMT5) from Oryza sativa subsp. japonica (Rice).